The primary structure comprises 65 residues: Disintegrin CC5 (65 aa).

Residues 1 to 65 (MNSAHPCCDP…SDCPRNRYKS (65 aa)) form the Disintegrin domain. 4 disulfide bridges follow: C7–C30, C21–C27, C26–C51, and C39–C58. The Cell attachment site motif lies at 43–45 (RGD).

The protein belongs to the disintegrin family. Dimeric disintegrin subfamily. As to quaternary structure, homodimer; disulfide-linked. Expressed by the venom gland.

It is found in the secreted. In terms of biological role, binds and inhibits integrins alpha-IIb/beta-3 (ITGA2B/ITGB3), alpha-V/beta-3 (ITGAV/ITGB3) and alpha-5/beta-1 (ITGA5/ITGB1). The polypeptide is Disintegrin CC5 (Cerastes cerastes (Horned desert viper)).